The primary structure comprises 185 residues: Shikimate kinase (185 aa).

15–20 lines the ATP pocket; that stretch reads GAGKST. Residue serine 19 participates in Mg(2+) binding. Aspartate 37, arginine 61, and glycine 83 together coordinate substrate. Arginine 121 contacts ATP. Arginine 146 serves as a coordination point for substrate.

It belongs to the shikimate kinase family. Monomer. The cofactor is Mg(2+).

The protein localises to the cytoplasm. It catalyses the reaction shikimate + ATP = 3-phosphoshikimate + ADP + H(+). Its pathway is metabolic intermediate biosynthesis; chorismate biosynthesis; chorismate from D-erythrose 4-phosphate and phosphoenolpyruvate: step 5/7. Catalyzes the specific phosphorylation of the 3-hydroxyl group of shikimic acid using ATP as a cosubstrate. This Blochmanniella floridana protein is Shikimate kinase.